Reading from the N-terminus, the 401-residue chain is NADH-dependent flavin oxidoreductase iliE (401 aa).

FMN-binding positions include A25–S28 and Q107. A substrate-binding site is contributed by H188–H191. A346 to R347 is a binding site for FMN.

It belongs to the NADH:flavin oxidoreductase/NADH oxidase family.

Its function is as follows. NADH-dependent flavin oxidoreductase; part of the gene cluster that mediates the biosynthesis of ilicicolin H, a 4-hydroxy-2-pyridonealkaloid that has potent and broad antifungal activities by inhibiting the mitochondrial respiration chain. The biosynthesis of ilicicolin H starts with formation of the tetramic acid by the hybrid PKS-NRPS synthetase iliA with the partnering trans-enoyl reductase iliB since iliA lacks a designated enoylreductase (ER) domain. The cytochrome P450 monooxygenase iliC then catalyzes the ring expansion of the tetramate to the acyclic 2-pyridone. The pericyclase iliD further converts the acyclic 2-pyridone into 8-epi-ilicicolin H. 8-epi-ilicicolin H might then spontaneously convert to ilicicolin H since ilicicolin H is produced in the absence of the epimerase iliE, in contrast to what was observed for the Talaromyces variabilis ilicolin H biosynthetic pathway. The protein is NADH-dependent flavin oxidoreductase iliE of Hypocrea jecorina (strain QM6a) (Trichoderma reesei).